A 68-amino-acid chain; its full sequence is uncharacterized protein (68 aa).

The disordered stretch occupies residues 1-20; it reads MYKQKKKNHPFQCKKKKKKK. A helical transmembrane segment spans residues 27-44; the sequence is IKLLFNYFLFFNFIITTF.

The protein resides in the membrane. This is an uncharacterized protein from Dictyostelium discoideum (Social amoeba).